We begin with the raw amino-acid sequence, 34 residues long: Photosystem II reaction center protein M (34 aa).

The helical transmembrane segment at 5–25 (ILAFIATALFILIPTAFLLII) threads the bilayer.

This sequence belongs to the PsbM family. PSII is composed of 1 copy each of membrane proteins PsbA, PsbB, PsbC, PsbD, PsbE, PsbF, PsbH, PsbI, PsbJ, PsbK, PsbL, PsbM, PsbT, PsbX, PsbY, PsbZ, Psb30/Ycf12, at least 3 peripheral proteins of the oxygen-evolving complex and a large number of cofactors. It forms dimeric complexes.

It localises to the plastid. It is found in the chloroplast thylakoid membrane. Its function is as follows. One of the components of the core complex of photosystem II (PSII). PSII is a light-driven water:plastoquinone oxidoreductase that uses light energy to abstract electrons from H(2)O, generating O(2) and a proton gradient subsequently used for ATP formation. It consists of a core antenna complex that captures photons, and an electron transfer chain that converts photonic excitation into a charge separation. This subunit is found at the monomer-monomer interface. The polypeptide is Photosystem II reaction center protein M (Agrostis stolonifera (Creeping bentgrass)).